The sequence spans 339 residues: Dihydroorotase (339 aa).

Zn(2+)-binding residues include histidine 12 and histidine 14. Residues 14 to 16 (HVR) and asparagine 40 contribute to the substrate site. The Zn(2+) site is built by lysine 94, histidine 133, histidine 167, and aspartate 239. Residue lysine 94 is modified to N6-carboxylysine. Histidine 133 serves as a coordination point for substrate. Aspartate 239 is a catalytic residue. Substrate is bound by residues histidine 243 and alanine 255.

This sequence belongs to the metallo-dependent hydrolases superfamily. DHOase family. Class II DHOase subfamily. In terms of assembly, homodimer. Zn(2+) serves as cofactor.

It catalyses the reaction (S)-dihydroorotate + H2O = N-carbamoyl-L-aspartate + H(+). The protein operates within pyrimidine metabolism; UMP biosynthesis via de novo pathway; (S)-dihydroorotate from bicarbonate: step 3/3. Its function is as follows. Catalyzes the reversible cyclization of carbamoyl aspartate to dihydroorotate. The protein is Dihydroorotase of Helicobacter pylori (strain J99 / ATCC 700824) (Campylobacter pylori J99).